Consider the following 186-residue polypeptide: Protein GrpE (186 aa).

Basic and acidic residues-rich tracts occupy residues 1–13 (MSDN…EEQH) and 23–34 (EETHQAEDAVEH). Residues 1–34 (MSDNKTELNEEQHNATAEGEVSEETHQAEDAVEH) form a disordered region.

Belongs to the GrpE family. Homodimer.

It localises to the cytoplasm. Functionally, participates actively in the response to hyperosmotic and heat shock by preventing the aggregation of stress-denatured proteins, in association with DnaK and GrpE. It is the nucleotide exchange factor for DnaK and may function as a thermosensor. Unfolded proteins bind initially to DnaJ; upon interaction with the DnaJ-bound protein, DnaK hydrolyzes its bound ATP, resulting in the formation of a stable complex. GrpE releases ADP from DnaK; ATP binding to DnaK triggers the release of the substrate protein, thus completing the reaction cycle. Several rounds of ATP-dependent interactions between DnaJ, DnaK and GrpE are required for fully efficient folding. The chain is Protein GrpE from Hydrogenovibrio crunogenus (strain DSM 25203 / XCL-2) (Thiomicrospira crunogena).